We begin with the raw amino-acid sequence, 401 residues long: 8-amino-7-oxononanoate synthase (401 aa).

Residue arginine 24 participates in substrate binding. 111-112 (GF) is a pyridoxal 5'-phosphate binding site. Residue histidine 137 coordinates substrate. Residues serine 183, histidine 211, and threonine 240 each contribute to the pyridoxal 5'-phosphate site. At lysine 243 the chain carries N6-(pyridoxal phosphate)lysine. Threonine 357 lines the substrate pocket.

It belongs to the class-II pyridoxal-phosphate-dependent aminotransferase family. BioF subfamily. In terms of assembly, homodimer. It depends on pyridoxal 5'-phosphate as a cofactor.

The catalysed reaction is 6-carboxyhexanoyl-[ACP] + L-alanine + H(+) = (8S)-8-amino-7-oxononanoate + holo-[ACP] + CO2. Its pathway is cofactor biosynthesis; biotin biosynthesis. Functionally, catalyzes the decarboxylative condensation of pimeloyl-[acyl-carrier protein] and L-alanine to produce 8-amino-7-oxononanoate (AON), [acyl-carrier protein], and carbon dioxide. This Xylella fastidiosa (strain 9a5c) protein is 8-amino-7-oxononanoate synthase.